The following is a 156-amino-acid chain: Small ribosomal subunit protein uS7 (156 aa).

This sequence belongs to the universal ribosomal protein uS7 family. Part of the 30S ribosomal subunit. Contacts proteins S9 and S11.

In terms of biological role, one of the primary rRNA binding proteins, it binds directly to 16S rRNA where it nucleates assembly of the head domain of the 30S subunit. Is located at the subunit interface close to the decoding center, probably blocks exit of the E-site tRNA. In Paraburkholderia phymatum (strain DSM 17167 / CIP 108236 / LMG 21445 / STM815) (Burkholderia phymatum), this protein is Small ribosomal subunit protein uS7.